Consider the following 208-residue polypeptide: Outer-membrane lipoprotein LolB (208 aa).

The N-terminal stretch at Met1–Ala21 is a signal peptide. The N-palmitoyl cysteine moiety is linked to residue Cys22. The S-diacylglycerol cysteine moiety is linked to residue Cys22.

Belongs to the LolB family. Monomer.

It localises to the cell outer membrane. Functionally, plays a critical role in the incorporation of lipoproteins in the outer membrane after they are released by the LolA protein. This chain is Outer-membrane lipoprotein LolB, found in Erwinia tasmaniensis (strain DSM 17950 / CFBP 7177 / CIP 109463 / NCPPB 4357 / Et1/99).